We begin with the raw amino-acid sequence, 246 residues long: tRNA (guanine-N(1)-)-methyltransferase (246 aa).

Residues Gly-114 and 134–139 (IGDYIL) contribute to the S-adenosyl-L-methionine site.

This sequence belongs to the RNA methyltransferase TrmD family. In terms of assembly, homodimer.

The protein localises to the cytoplasm. It carries out the reaction guanosine(37) in tRNA + S-adenosyl-L-methionine = N(1)-methylguanosine(37) in tRNA + S-adenosyl-L-homocysteine + H(+). In terms of biological role, specifically methylates guanosine-37 in various tRNAs. The protein is tRNA (guanine-N(1)-)-methyltransferase of Coxiella burnetii (strain CbuK_Q154) (Coxiella burnetii (strain Q154)).